A 428-amino-acid polypeptide reads, in one-letter code: D-inositol 3-phosphate glycosyltransferase (428 aa).

Position 17 (H17) interacts with 1D-myo-inositol 3-phosphate. UDP-N-acetyl-alpha-D-glucosamine is bound by residues 23 to 24 (QP) and G31. Residues 28-33 (DAGGMN), R86, Y119, T143, and R163 contribute to the 1D-myo-inositol 3-phosphate site. Positions 237 and 242 each coordinate UDP-N-acetyl-alpha-D-glucosamine. Residues Y312, R313, and A315 each coordinate Mg(2+). Positions 325 and 333 each coordinate UDP-N-acetyl-alpha-D-glucosamine. Residue T339 participates in Mg(2+) binding.

The protein belongs to the glycosyltransferase group 1 family. MshA subfamily. In terms of assembly, homodimer.

The enzyme catalyses 1D-myo-inositol 3-phosphate + UDP-N-acetyl-alpha-D-glucosamine = 1D-myo-inositol 2-acetamido-2-deoxy-alpha-D-glucopyranoside 3-phosphate + UDP + H(+). Its function is as follows. Catalyzes the transfer of a N-acetyl-glucosamine moiety to 1D-myo-inositol 3-phosphate to produce 1D-myo-inositol 2-acetamido-2-deoxy-glucopyranoside 3-phosphate in the mycothiol biosynthesis pathway. This chain is D-inositol 3-phosphate glycosyltransferase, found in Thermobispora bispora (strain ATCC 19993 / DSM 43833 / CBS 139.67 / JCM 10125 / KCTC 9307 / NBRC 14880 / R51).